A 36-amino-acid polypeptide reads, in one-letter code: Defensin-like turtle egg white protein TEWP (36 aa).

At Gln1 the chain carries Pyrrolidone carboxylic acid. 3 cysteine pairs are disulfide-bonded: Cys4-Cys30, Cys8-Cys29, and Cys12-Cys24.

The protein belongs to the beta-defensin family. In terms of assembly, monomer. In terms of tissue distribution, detected in egg white (at protein level).

The protein localises to the secreted. Antibacterial and antiviral peptide. Has strong inhibitory activity towards E.coli and S.typhimurium. Has significant antiviral activity against Chandipura virus. The sequence is that of Defensin-like turtle egg white protein TEWP from Caretta caretta (Loggerhead sea turtle).